A 526-amino-acid polypeptide reads, in one-letter code: Peptide chain release factor 3 (526 aa).

The region spanning 8–277 (NKRRTFAIIS…GLTQWAPAPQ (270 aa)) is the tr-type G domain. GTP is bound by residues 17-24 (SHPDAGKT), 85-89 (DTPGH), and 139-142 (NKLD).

The protein belongs to the TRAFAC class translation factor GTPase superfamily. Classic translation factor GTPase family. PrfC subfamily.

The protein resides in the cytoplasm. Functionally, increases the formation of ribosomal termination complexes and stimulates activities of RF-1 and RF-2. It binds guanine nucleotides and has strong preference for UGA stop codons. It may interact directly with the ribosome. The stimulation of RF-1 and RF-2 is significantly reduced by GTP and GDP, but not by GMP. This chain is Peptide chain release factor 3, found in Histophilus somni (strain 129Pt) (Haemophilus somnus).